A 181-amino-acid polypeptide reads, in one-letter code: CASP-like protein 1F1 (181 aa).

Residues 1-18 are Cytoplasmic-facing; sequence MPNNEAKFSVNQPLKTQK. The chain crosses the membrane as a helical span at residues 19 to 39; sequence LFIGVQIFFRIVAIAASVASS. Topologically, residues 40–70 are extracellular; that stretch reads WLMITSKQVIDIGGIVLDARYSYSPEFKFLA. The helical transmembrane segment at 71–91 threads the bilayer; the sequence is FTNIVVGCFSLLSLLFLVLVV. At 92–100 the chain is on the cytoplasmic side; it reads RQGSNPNHY. Residues 101–121 traverse the membrane as a helical segment; that stretch reads FFLFLHDLAMMSLVVGGCAAA. Residues 122 to 152 lie on the Extracellular side of the membrane; the sequence is TTVGFLGKHGNSHTGWMQICDNFGKFCNRAQ. The chain crosses the membrane as a helical span at residues 153 to 173; that stretch reads TSVTISYLNLICLSILTITSA. The Cytoplasmic segment spans residues 174-181; sequence SKSRKMEA.

This sequence belongs to the Casparian strip membrane proteins (CASP) family. In terms of assembly, homodimer and heterodimers.

The protein resides in the cell membrane. In Populus trichocarpa (Western balsam poplar), this protein is CASP-like protein 1F1.